A 227-amino-acid polypeptide reads, in one-letter code: Enolase-phosphatase E1 (227 aa).

Belongs to the HAD-like hydrolase superfamily. MasA/MtnC family. Monomer. Mg(2+) is required as a cofactor.

The enzyme catalyses 5-methylsulfanyl-2,3-dioxopentyl phosphate + H2O = 1,2-dihydroxy-5-(methylsulfanyl)pent-1-en-3-one + phosphate. The protein operates within amino-acid biosynthesis; L-methionine biosynthesis via salvage pathway; L-methionine from S-methyl-5-thio-alpha-D-ribose 1-phosphate: step 3/6. Its pathway is amino-acid biosynthesis; L-methionine biosynthesis via salvage pathway; L-methionine from S-methyl-5-thio-alpha-D-ribose 1-phosphate: step 4/6. In terms of biological role, bifunctional enzyme that catalyzes the enolization of 2,3-diketo-5-methylthiopentyl-1-phosphate (DK-MTP-1-P) into the intermediate 2-hydroxy-3-keto-5-methylthiopentenyl-1-phosphate (HK-MTPenyl-1-P), which is then dephosphorylated to form the acireductone 1,2-dihydroxy-3-keto-5-methylthiopentene (DHK-MTPene). This Pseudomonas savastanoi pv. phaseolicola (strain 1448A / Race 6) (Pseudomonas syringae pv. phaseolicola (strain 1448A / Race 6)) protein is Enolase-phosphatase E1.